The following is a 318-amino-acid chain: Ankyrin repeat and SOCS box protein 7 (318 aa).

ANK repeat units follow at residues 13–42 (QEELQIQAAVAAGDVHTVRKMLEQGYSPNG), 46–75 (NGWTLLHFSAARGKERCVRVFLEHGADPTV), 80–109 (GGFTALHYAAMHGRARIARLMLESEYRSDI), 116–145 (DGWTPLHVAAHYGRDSFVRLLLEFKAEVDP), 149–178 (KGTTPLQLAIIRERSSCVKILLDHNANIDI), 180–208 (NGFLLRYAVIKSNHSYCRMFLQRGADTNL), and 213–242 (DGQTPLHLSALRDDVLCARMLYNYGADTNT). Residues 265–318 (LDFLQDVTRQPRTLQDLCRIKIRQCIGLQNLKLLDELPIAKVMKDYLKHKFDDI) form the SOCS box domain.

It belongs to the ankyrin SOCS box (ASB) family. Interacts with CUL5. Interacts with RNF7. Interacts with PSRC1.

The protein localises to the nucleus. It localises to the cytoplasm. It participates in protein modification; protein ubiquitination. Functionally, probable substrate-recognition component of a SCF-like ECS (Elongin-Cullin-SOCS-box protein) E3 ubiquitin-protein ligase complex which mediates the ubiquitination and subsequent proteasomal degradation of target proteins. Plays a role in spindle dynamics and genome integrity by targeting the mitotic progression protein PSRC1 for proteasomal degradation in a cell cycle-dependent manner. Also participates in meiosis by mediating the proper attachment between kinetochores and microtubules. In Mus musculus (Mouse), this protein is Ankyrin repeat and SOCS box protein 7 (Asb7).